The following is a 169-amino-acid chain: Ribosome maturation factor RimM (169 aa).

The PRC barrel domain maps to 91 to 167 (EGEYYFADLI…RIVIATDFAH (77 aa)).

It belongs to the RimM family. In terms of assembly, binds ribosomal protein uS19.

It is found in the cytoplasm. Functionally, an accessory protein needed during the final step in the assembly of 30S ribosomal subunit, possibly for assembly of the head region. Essential for efficient processing of 16S rRNA. May be needed both before and after RbfA during the maturation of 16S rRNA. It has affinity for free ribosomal 30S subunits but not for 70S ribosomes. The sequence is that of Ribosome maturation factor RimM from Erythrobacter litoralis (strain HTCC2594).